A 101-amino-acid polypeptide reads, in one-letter code: Putative metal transport protein HQ_3622A (101 aa).

Residues 1–32 form the signal peptide; that stretch reads MKIISMSMDSWIQRAALMLLGLVIVAPFFGWT. A helical membrane pass occupies residues 75–95; it reads IGTLISAGVGTVLTLIVAFGA.

It is found in the cell membrane. Its function is as follows. May be involved in metal transport. In Haloquadratum walsbyi (strain DSM 16790 / HBSQ001), this protein is Putative metal transport protein HQ_3622A.